The following is a 273-amino-acid chain: Gap junction beta-5 protein (273 aa).

At 1 to 20 the chain is on the cytoplasmic side; it reads MNWSIFEGLLSGVNKYSTAF. A helical transmembrane segment spans residues 21-40; that stretch reads GRIWLSLVFIFRVLVYLVTA. The Extracellular portion of the chain corresponds to 41-75; that stretch reads ERVWSDDHKDFDCNTRQPGCSNVCFDEFFPVSHVR. Residues 76–98 traverse the membrane as a helical segment; sequence LWALQLILVTCPSLLVVMHVAYR. Residues 99–126 are Cytoplasmic-facing; sequence EVQEKRHREAHGENSGRLYLNPGKKRGG. Residues 127 to 149 traverse the membrane as a helical segment; that stretch reads LWWTYVCSLVFKASVDIAFLYVF. The Extracellular segment spans residues 150–187; it reads HSFYPKYILPPVVKCHADPCPNIVDCFISKPSEKNIFT. A helical membrane pass occupies residues 188-210; the sequence is LFMVATAAICILLNLVELIYLVS. Topologically, residues 211–273 are cytoplasmic; the sequence is KRCHECLAAR…PRDHVKKTIL (63 aa).

Belongs to the connexin family. Beta-type (group I) subfamily. A connexon is composed of a hexamer of connexins.

The protein resides in the cell membrane. It is found in the cell junction. The protein localises to the gap junction. One gap junction consists of a cluster of closely packed pairs of transmembrane channels, the connexons, through which materials of low MW diffuse from one cell to a neighboring cell. The sequence is that of Gap junction beta-5 protein (GJB5) from Homo sapiens (Human).